The primary structure comprises 132 residues: Small ribosomal subunit protein uS8 (132 aa).

This sequence belongs to the universal ribosomal protein uS8 family. As to quaternary structure, part of the 30S ribosomal subunit. Contacts proteins S5 and S12.

One of the primary rRNA binding proteins, it binds directly to 16S rRNA central domain where it helps coordinate assembly of the platform of the 30S subunit. This is Small ribosomal subunit protein uS8 from Stenotrophomonas maltophilia (strain R551-3).